Here is a 404-residue protein sequence, read N- to C-terminus: Probable tRNA sulfurtransferase (404 aa).

In terms of domain architecture, THUMP spans 60-165 (QPVVEALKLV…DEAAYISYEE (106 aa)). Residues 183-184 (ML), 208-209 (HF), R265, G287, and Q296 each bind ATP.

It belongs to the ThiI family.

The protein resides in the cytoplasm. It carries out the reaction [ThiI sulfur-carrier protein]-S-sulfanyl-L-cysteine + a uridine in tRNA + 2 reduced [2Fe-2S]-[ferredoxin] + ATP + H(+) = [ThiI sulfur-carrier protein]-L-cysteine + a 4-thiouridine in tRNA + 2 oxidized [2Fe-2S]-[ferredoxin] + AMP + diphosphate. The catalysed reaction is [ThiS sulfur-carrier protein]-C-terminal Gly-Gly-AMP + S-sulfanyl-L-cysteinyl-[cysteine desulfurase] + AH2 = [ThiS sulfur-carrier protein]-C-terminal-Gly-aminoethanethioate + L-cysteinyl-[cysteine desulfurase] + A + AMP + 2 H(+). Its pathway is cofactor biosynthesis; thiamine diphosphate biosynthesis. Catalyzes the ATP-dependent transfer of a sulfur to tRNA to produce 4-thiouridine in position 8 of tRNAs, which functions as a near-UV photosensor. Also catalyzes the transfer of sulfur to the sulfur carrier protein ThiS, forming ThiS-thiocarboxylate. This is a step in the synthesis of thiazole, in the thiamine biosynthesis pathway. The sulfur is donated as persulfide by IscS. This is Probable tRNA sulfurtransferase from Streptococcus pyogenes serotype M5 (strain Manfredo).